Consider the following 339-residue polypeptide: Very-long-chain 3-oxoacyl-CoA reductase (339 aa).

The helical transmembrane segment at 19-39 threads the bilayer; it reads VALFLLSIGGLFTACKLFSFC. Residues Leu-64, Lys-105, Asp-119, Asp-127, Asn-146, Tyr-213, Lys-217, Val-246, and Ser-248 each contribute to the NADP(+) site. Catalysis depends on Tyr-213, which acts as the Proton donor. The active-site Lowers pKa of active site Tyr is the Lys-217.

Belongs to the short-chain dehydrogenases/reductases (SDR) family.

Its subcellular location is the endoplasmic reticulum membrane. It catalyses the reaction a very-long-chain (3R)-3-hydroxyacyl-CoA + NADP(+) = a very-long-chain 3-oxoacyl-CoA + NADPH + H(+). It functions in the pathway lipid metabolism; fatty acid biosynthesis. Its function is as follows. Component of the microsomal membrane bound fatty acid elongation system, which produces the 26-carbon very long-chain fatty acids (VLCFA) from palmitate. Catalyzes the reduction of the 3-ketoacyl-CoA intermediate that is formed in each cycle of fatty acid elongation. VLCFAs serve as precursors for ceramide and sphingolipids. The protein is Very-long-chain 3-oxoacyl-CoA reductase of Ajellomyces capsulatus (strain NAm1 / WU24) (Darling's disease fungus).